We begin with the raw amino-acid sequence, 187 residues long: MSDDFELDTDDLKRRMDGAMANLKTEFASLRTGRASGSMLEPIQVEAYGQMTPINQIGTVNVPEPRMVTINVWDKSMVGKVEKAIRESGLGINPQLNGTIIMLPIPELNEERRRELTKVAGQYAEHARVAIRNVRRDGMDQIKKAKADGISEDDQKFWEAEVQELTDKMIKVVDAALETKQAEIMQV.

It belongs to the RRF family.

It is found in the cytoplasm. Functionally, responsible for the release of ribosomes from messenger RNA at the termination of protein biosynthesis. May increase the efficiency of translation by recycling ribosomes from one round of translation to another. The polypeptide is Ribosome-recycling factor (Ruegeria pomeroyi (strain ATCC 700808 / DSM 15171 / DSS-3) (Silicibacter pomeroyi)).